We begin with the raw amino-acid sequence, 503 residues long: UDP-N-acetylmuramoylalanine--D-glutamate ligase (503 aa).

129 to 135 (GTNGKTT) contributes to the ATP binding site.

It belongs to the MurCDEF family.

It is found in the cytoplasm. The enzyme catalyses UDP-N-acetyl-alpha-D-muramoyl-L-alanine + D-glutamate + ATP = UDP-N-acetyl-alpha-D-muramoyl-L-alanyl-D-glutamate + ADP + phosphate + H(+). The protein operates within cell wall biogenesis; peptidoglycan biosynthesis. Cell wall formation. Catalyzes the addition of glutamate to the nucleotide precursor UDP-N-acetylmuramoyl-L-alanine (UMA). This Burkholderia multivorans (strain ATCC 17616 / 249) protein is UDP-N-acetylmuramoylalanine--D-glutamate ligase.